The primary structure comprises 191 residues: Small ribosomal subunit protein bS6 (191 aa).

Residues 168 to 191 (KVNLTRKPTPNKSSENKQKVEKQA) are disordered. Residues 181–191 (SENKQKVEKQA) show a composition bias toward basic and acidic residues.

Belongs to the bacterial ribosomal protein bS6 family.

Its function is as follows. Binds together with bS18 to 16S ribosomal RNA. This is Small ribosomal subunit protein bS6 from Mycoplasmoides gallisepticum (strain R(low / passage 15 / clone 2)) (Mycoplasma gallisepticum).